Reading from the N-terminus, the 136-residue chain is Large ribosomal subunit protein bL20 (136 aa).

Belongs to the bacterial ribosomal protein bL20 family.

In terms of biological role, binds directly to 23S ribosomal RNA and is necessary for the in vitro assembly process of the 50S ribosomal subunit. It is not involved in the protein synthesizing functions of that subunit. In Tropheryma whipplei (strain TW08/27) (Whipple's bacillus), this protein is Large ribosomal subunit protein bL20.